Here is a 103-residue protein sequence, read N- to C-terminus: Large ribosomal subunit protein uL24 (103 aa).

This sequence belongs to the universal ribosomal protein uL24 family. In terms of assembly, part of the 50S ribosomal subunit.

One of two assembly initiator proteins, it binds directly to the 5'-end of the 23S rRNA, where it nucleates assembly of the 50S subunit. In terms of biological role, one of the proteins that surrounds the polypeptide exit tunnel on the outside of the subunit. This is Large ribosomal subunit protein uL24 from Sinorhizobium fredii (strain NBRC 101917 / NGR234).